We begin with the raw amino-acid sequence, 144 residues long: D-aminoacyl-tRNA deacylase (144 aa).

The short motif at 136–137 (GP) is the Gly-cisPro motif, important for rejection of L-amino acids element.

Belongs to the DTD family. In terms of assembly, homodimer.

It localises to the cytoplasm. It catalyses the reaction glycyl-tRNA(Ala) + H2O = tRNA(Ala) + glycine + H(+). It carries out the reaction a D-aminoacyl-tRNA + H2O = a tRNA + a D-alpha-amino acid + H(+). An aminoacyl-tRNA editing enzyme that deacylates mischarged D-aminoacyl-tRNAs. Also deacylates mischarged glycyl-tRNA(Ala), protecting cells against glycine mischarging by AlaRS. Acts via tRNA-based rather than protein-based catalysis; rejects L-amino acids rather than detecting D-amino acids in the active site. By recycling D-aminoacyl-tRNA to D-amino acids and free tRNA molecules, this enzyme counteracts the toxicity associated with the formation of D-aminoacyl-tRNA entities in vivo and helps enforce protein L-homochirality. The chain is D-aminoacyl-tRNA deacylase from Vibrio vulnificus (strain CMCP6).